Here is a 242-residue protein sequence, read N- to C-terminus: Anamorsin homolog (242 aa).

The tract at residues 1-140 (MMNFADTLVI…NVTAENPDFL (140 aa)) is N-terminal SAM-like domain. A linker region spans residues 141–162 (SNEDDDEGNSSDGEAYQNAEDN). [4Fe-4S] cluster contacts are provided by Cys-205, Cys-208, Cys-216, and Cys-219. Short sequence motifs (cx2C motif) lie at residues 205–208 (CGNC) and 216–219 (CASC). Positions 205–219 (CGNCYLGDAFRCASC) are fe-S binding site B.

Belongs to the anamorsin family. In terms of assembly, monomer. It depends on [4Fe-4S] cluster as a cofactor.

The protein localises to the cytoplasm. Its subcellular location is the mitochondrion intermembrane space. Its function is as follows. Component of the cytosolic iron-sulfur (Fe-S) protein assembly (CIA) machinery. Required for the maturation of extramitochondrial Fe-S proteins. Part of an electron transfer chain functioning in an early step of cytosolic Fe-S biogenesis, facilitating the de novo assembly of a [4Fe-4S] cluster on the cytosolic Fe-S scaffold complex. Electrons are transferred from NADPH via a FAD- and FMN-containing diflavin oxidoreductase. Together with the diflavin oxidoreductase, also required for the assembly of the diferric tyrosyl radical cofactor of ribonucleotide reductase (RNR), probably by providing electrons for reduction during radical cofactor maturation in the catalytic small subunit. This is Anamorsin homolog from Plasmodium knowlesi (strain H).